A 719-amino-acid polypeptide reads, in one-letter code: Penicillin-binding protein 1A (719 aa).

A transglycosylase region spans residues 62 to 223 (LIADLGSERR…NQYDPYSHPE (162 aa)). The active-site Proton donor; for transglycosylase activity is Glu-91. The interval 297-611 (DVYTNVDQEA…RLTPLVGNGL (315 aa)) is transpeptidase. Ser-370 functions as the Acyl-ester intermediate; for transpeptidase activity in the catalytic mechanism. A disordered region spans residues 652-719 (ARSTWSSPAP…QNQNPQPAQP (68 aa)). The span at 654–719 (STWSSPAPQQ…QNQNPQPAQP (66 aa)) shows a compositional bias: low complexity.

The protein in the N-terminal section; belongs to the glycosyltransferase 51 family. This sequence in the C-terminal section; belongs to the transpeptidase family. Interacts with MreC in the elongasome.

The protein resides in the secreted. The catalysed reaction is [GlcNAc-(1-&gt;4)-Mur2Ac(oyl-L-Ala-gamma-D-Glu-L-Lys-D-Ala-D-Ala)](n)-di-trans,octa-cis-undecaprenyl diphosphate + beta-D-GlcNAc-(1-&gt;4)-Mur2Ac(oyl-L-Ala-gamma-D-Glu-L-Lys-D-Ala-D-Ala)-di-trans,octa-cis-undecaprenyl diphosphate = [GlcNAc-(1-&gt;4)-Mur2Ac(oyl-L-Ala-gamma-D-Glu-L-Lys-D-Ala-D-Ala)](n+1)-di-trans,octa-cis-undecaprenyl diphosphate + di-trans,octa-cis-undecaprenyl diphosphate + H(+). It carries out the reaction Preferential cleavage: (Ac)2-L-Lys-D-Ala-|-D-Ala. Also transpeptidation of peptidyl-alanyl moieties that are N-acyl substituents of D-alanine.. The protein operates within cell wall biogenesis; peptidoglycan biosynthesis. Cell wall formation. The protein is Penicillin-binding protein 1A (pbpA) of Streptococcus pneumoniae (strain ATCC BAA-255 / R6).